The chain runs to 622 residues: Basal cell adhesion molecule (622 aa).

A signal peptide spans 1 to 25 (MEPPDARAGLLWLTFLLSGYSGAQA). Ig-like V-type domains lie at 26-135 (ELHV…SSVR) and 140-250 (PEDT…HTFR). The Extracellular portion of the chain corresponds to 26 to 541 (ELHVSVPPRV…GSVAPQTAQA (516 aa)). Cystine bridges form between cysteine 47/cysteine 118, cysteine 165/cysteine 230, and cysteine 284/cysteine 330. 3 consecutive Ig-like C2-type domains span residues 267–342 (PSTT…EEVQ), 356–435 (PLEL…QSFQ), and 442–532 (PELK…FHFG). 4 N-linked (GlcNAc...) asparagine glycosylation sites follow: asparagine 314, asparagine 323, asparagine 370, and asparagine 377. 2 disulfides stabilise this stretch: cysteine 378–cysteine 418 and cysteine 467–cysteine 516. The chain crosses the membrane as a helical span at residues 542 to 562 (GVAVMAVAVSVGLLLLVVAAF). At 563–622 (YCMRRKGRPGCCRRAEKGAPPAREPELSHSGSERPEHTGLLMGGPSGGGRGGSGGFGDEC) the chain is on the cytoplasmic side. Residues 574–622 (CRRAEKGAPPAREPELSHSGSERPEHTGLLMGGPSGGGRGGSGGFGDEC) form a disordered region. Residues 575–599 (RRAEKGAPPAREPELSHSGSERPEH) show a composition bias toward basic and acidic residues. A phosphoserine mark is found at serine 590, serine 592, serine 594, and serine 615. Gly residues predominate over residues 603-622 (LMGGPSGGGRGGSGGFGDEC).

As to quaternary structure, homodimer. Interacts with ITGA4:ITGB1. Interacts with spectrins SPTA1 and SPTB1. Epinephrine-stimulated phosphorylation of Ser-615 by PKA enhances adhesion to laminin. Ser-615 can also be phosphorylated by AKT1.

It is found in the cell membrane. In terms of biological role, transmembrane glycoprotein that functions as both a receptor and an adhesion molecule playing a crucial role in cell adhesion, motility, migration and invasion. Extracellular domain enables binding to extracellular matrix proteins, such as laminin, integrin and other ligands while its intracellular domain interacts with cytoskeletal proteins like hemoglobin, facilitating cell signal transduction. Serves as a receptor for laminin alpha-5/LAMA5 to promote cell adhesion. Mechanistically, JAK2 induces BCAM phosphorylation and activates its adhesion to laminin by stimulating a Rap1/AKT signaling pathway in the absence of EPOR. The sequence is that of Basal cell adhesion molecule (Bcam) from Mus musculus (Mouse).